The primary structure comprises 116 residues: Fluoride-specific ion channel FluC 2 (116 aa).

Helical transmembrane passes span L3–V23 and L43–V63. Na(+) is bound by residues G67 and T70. Residues V96 to L116 form a helical membrane-spanning segment.

Belongs to the fluoride channel Fluc/FEX (TC 1.A.43) family.

It localises to the cell membrane. The catalysed reaction is fluoride(in) = fluoride(out). Na(+) is not transported, but it plays an essential structural role and its presence is essential for fluoride channel function. In terms of biological role, fluoride-specific ion channel. Important for reducing fluoride concentration in the cell, thus reducing its toxicity. In Natronomonas pharaonis (strain ATCC 35678 / DSM 2160 / CIP 103997 / JCM 8858 / NBRC 14720 / NCIMB 2260 / Gabara) (Halobacterium pharaonis), this protein is Fluoride-specific ion channel FluC 2.